The primary structure comprises 156 residues: Photosystem I reaction center subunit XI (156 aa).

2 consecutive transmembrane segments (helical) span residues 75–95 (GGLL…SLYA) and 128–148 (FFIG…ALYF).

Belongs to the PsaL family.

It localises to the cellular thylakoid membrane. The sequence is that of Photosystem I reaction center subunit XI from Crocosphaera subtropica (strain ATCC 51142 / BH68) (Cyanothece sp. (strain ATCC 51142)).